The sequence spans 87 residues: Small ribosomal subunit protein uS15c (87 aa).

It belongs to the universal ribosomal protein uS15 family. In terms of assembly, part of the 30S ribosomal subunit.

The protein resides in the plastid. It localises to the chloroplast. The chain is Small ribosomal subunit protein uS15c (rps15) from Oenothera argillicola (Appalachian evening primrose).